The chain runs to 489 residues: MTSKYFSVLVFIILASNEVVAKRHSSTPKLRKTDFPEDFIFGAATSAYQVEGAAQEDGRGPSIWDTFSEKYPEKIKDGSNGSIADDSYHLYKEDVGLLHQIGFNAYRFSISWSRILPRGNLKGGINQAGIDYYNNLINELLSKGIKPFATIFHWDTPQDLEDAYGGFRGAEIVNDFRDYADICFKSFGDRVKHWITLNEPLTVVQQGYVAGVMAPGRCSKFTNPNCTAGNGATEPYIVGHNLILAHGEAIKVYRKKYKASQKGQVGIALNAGWNLPYTESAEDRLAAARAMAFTFDYFMEPLVTGKYPVDMVNNVKGGRLPTFTSKQSNMLKGSYDFIGINYYSSSYAKDVPCSSENVTMFSDPCASVTGERDGGIRDLILYAKYKFKDPVMYITENGRDEASTGKILLKDGDRIDYYARHLKMVQDAILIGANVKGFFAWSLLDNFEWASGYTVRFGLVYVDFNDRRKRYLKKSAHWFRHLLNGKKEN.

An N-terminal signal peptide occupies residues 1 to 21 (MTSKYFSVLVFIILASNEVVA). Residue glutamine 49 coordinates a beta-D-glucoside. The N-linked (GlcNAc...) asparagine glycan is linked to asparagine 80. A beta-D-glucoside-binding positions include histidine 153 and 198 to 199 (NE). The active-site Proton donor is glutamate 199. Cysteine 218 and cysteine 226 are oxidised to a cystine. Asparagine 225 carries N-linked (GlcNAc...) asparagine glycosylation. Residue tyrosine 343 participates in a beta-D-glucoside binding. An N-linked (GlcNAc...) asparagine glycan is attached at asparagine 357. A beta-D-glucoside is bound by residues glutamate 396, tryptophan 441, 448–449 (EW), and phenylalanine 457. Glutamate 396 serves as the catalytic Nucleophile.

This sequence belongs to the glycosyl hydrolase 1 family.

The catalysed reaction is Hydrolysis of terminal, non-reducing beta-D-glucosyl residues with release of beta-D-glucose.. This is Beta-glucosidase 14 from Arabidopsis thaliana (Mouse-ear cress).